A 123-amino-acid chain; its full sequence is Thioredoxin domain-containing protein 17 (123 aa).

Ala-2 carries the post-translational modification N-acetylalanine. A Thioredoxin domain is found at 41 to 123; the sequence is SWCPDCVQAE…NLVEMLFSED (83 aa). Residues Cys-43 and Cys-46 each act as nucleophile in the active site. The cysteines at positions 43 and 46 are disulfide-linked.

It belongs to the thioredoxin family. Interacts with TRXR1 and DYNLL1/DNCL1. In terms of processing, the oxidized protein is reduced by TRXR1. In terms of tissue distribution, ubiquitously expressed in cell lines.

It is found in the cytoplasm. Disulfide reductase. May participate in various redox reactions through the reversible oxidation of its active center dithiol to a disulfide and catalyze dithiol-disulfide exchange reactions. Modulates TNF-alpha signaling and NF-kappa-B activation. Has peroxidase activity and may contribute to the elimination of cellular hydrogen peroxide. This Homo sapiens (Human) protein is Thioredoxin domain-containing protein 17 (TXNDC17).